Here is a 432-residue protein sequence, read N- to C-terminus: Trigger factor (432 aa).

Positions 161 to 246 constitute a PPIase FKBP-type domain; it reads EDRVTIDFTG…LKKVEERELP (86 aa).

This sequence belongs to the FKBP-type PPIase family. Tig subfamily. In terms of assembly, homodimer and monomer. In vivo most of the ribosomes are in complex with monomeric TF. Uncomplexed TF, however, is in a monomer-dimer equilibrium with approximately two thirds of TF existing in a dimeric state.

It is found in the cytoplasm. It carries out the reaction [protein]-peptidylproline (omega=180) = [protein]-peptidylproline (omega=0). Its function is as follows. Involved in protein export. Acts as a chaperone by maintaining the newly synthesized protein in an open conformation. Functions as a peptidyl-prolyl cis-trans isomerase. This Shigella dysenteriae serotype 1 (strain Sd197) protein is Trigger factor.